Reading from the N-terminus, the 333-residue chain is Ketol-acid reductoisomerase (NADP(+)) (333 aa).

The 171-residue stretch at 1-171 (MSNDTQPKIA…GGARANIIKT (171 aa)) folds into the KARI N-terminal Rossmann domain. Residues 14-17 (YGSQ), Arg-37, Thr-42, and 72-75 (DMVQ) contribute to the NADP(+) site. Residue His-97 is part of the active site. Gly-123 provides a ligand contact to NADP(+). Positions 172-317 (TFKEETETDL…KKLRAKMVWL (146 aa)) constitute a KARI C-terminal knotted domain. Mg(2+) is bound by residues Asp-180, Glu-184, Glu-216, and Glu-220. Ser-241 provides a ligand contact to substrate.

The protein belongs to the ketol-acid reductoisomerase family. Requires Mg(2+) as cofactor.

The enzyme catalyses (2R)-2,3-dihydroxy-3-methylbutanoate + NADP(+) = (2S)-2-acetolactate + NADPH + H(+). It catalyses the reaction (2R,3R)-2,3-dihydroxy-3-methylpentanoate + NADP(+) = (S)-2-ethyl-2-hydroxy-3-oxobutanoate + NADPH + H(+). It functions in the pathway amino-acid biosynthesis; L-isoleucine biosynthesis; L-isoleucine from 2-oxobutanoate: step 2/4. The protein operates within amino-acid biosynthesis; L-valine biosynthesis; L-valine from pyruvate: step 2/4. In terms of biological role, involved in the biosynthesis of branched-chain amino acids (BCAA). Catalyzes an alkyl-migration followed by a ketol-acid reduction of (S)-2-acetolactate (S2AL) to yield (R)-2,3-dihydroxy-isovalerate. In the isomerase reaction, S2AL is rearranged via a Mg-dependent methyl migration to produce 3-hydroxy-3-methyl-2-ketobutyrate (HMKB). In the reductase reaction, this 2-ketoacid undergoes a metal-dependent reduction by NADPH to yield (R)-2,3-dihydroxy-isovalerate. The polypeptide is Ketol-acid reductoisomerase (NADP(+)) (Xanthomonas oryzae pv. oryzae (strain MAFF 311018)).